A 332-amino-acid polypeptide reads, in one-letter code: Glyceraldehyde-3-phosphate dehydrogenase 2 (332 aa).

NAD(+) contacts are provided by residues 11 to 12 (RI), Asp32, and Arg77. Residues 148 to 150 (SCT), Thr179, 208 to 209 (TG), and Arg231 contribute to the D-glyceraldehyde 3-phosphate site. The active-site Nucleophile is the Cys149. Tyr273 bears the Phosphotyrosine mark. The residue at position 274 (Thr274) is a Phosphothreonine. Residue Asn313 participates in NAD(+) binding.

This sequence belongs to the glyceraldehyde-3-phosphate dehydrogenase family. Homotetramer.

The protein localises to the cytoplasm. It carries out the reaction D-glyceraldehyde 3-phosphate + phosphate + NAD(+) = (2R)-3-phospho-glyceroyl phosphate + NADH + H(+). It participates in carbohydrate degradation; glycolysis; pyruvate from D-glyceraldehyde 3-phosphate: step 1/5. The chain is Glyceraldehyde-3-phosphate dehydrogenase 2 (Gapdh2) from Drosophila melanogaster (Fruit fly).